We begin with the raw amino-acid sequence, 398 residues long: O-methyltransferase hmp5 (398 aa).

S-adenosyl-L-methionine contacts are provided by residues Gly233–Gly234, Glu261, and Asp283–Phe284. The Proton acceptor role is filled by His303.

This sequence belongs to the class I-like SAM-binding methyltransferase superfamily. Cation-independent O-methyltransferase family.

It participates in secondary metabolite biosynthesis. Its function is as follows. O-methyltransferase; part of the gene cluster that mediates the biosynthesis of hypothemycin, a resorcylic acid lactone (RAL) that irreversibly inhibits a subset of protein kinases with a conserved cysteine in the ATP binding site such as human ERK2. The first step is performed by both PKSs hmp3 and hmp8 and leads to the production of 7',8'-dehydrozearalenol (DHZ). The highly reducing PKS hpm8 synthesizes the reduced hexaketide (7S,11S,2E,8E)-7,11-dihydroxy-dodeca-2,8-dienoate, which is transferred downstream to the non-reducing PKS hpm3. Hpm3 then extends the reduced hexaketide to a nonaketide, after which regioselective cyclization and macrolactonization affords DHZ. The next step is the conversion of DHZ into aigialomycin C and is performed by the O-methyltransferase hmp5, the FAD-binding monooxygenase hmp7, and the cytochrome P450 monooxygenase hmp1. The wide substrate tolerance of the hmp5 and hmp7 implies that the reactions from DHZ to aigialomycin C can occur in any order. The steps from aigialomycin C to hypothemycin are less well established. The FAD-linked oxidoreductase hmp9 presumably catalyzes oxidation of the C-6' hydroxyl to a ketone. The timing of this oxidation is important, since the resulting enone functional group is a Michael acceptor that can react spontaneously with glutathione, an abundant metabolite in fungal cells. The glutathione S-transferase hmp2 catalyzes cis-trans isomerization of the 7',8' double bond with equilibrium favoring the trans isomer. The hpm6-encoded transporter might preferentially pump hypothemycin out of the cell relative to the trans isomer aigialomycin A. The cis-to-trans isomerization may be coupled with C-4' hydroxylation, since all known hypothemycin analogs containing the enone functional group also have hydroxyl groups at both C-4' and C-5'. The polypeptide is O-methyltransferase hmp5 (Hypomyces subiculosus (Nectria subiculosa)).